We begin with the raw amino-acid sequence, 178 residues long: Caveolin-1 (178 aa).

Ser2 carries the post-translational modification N-acetylserine. Residue Ser2 is modified to Phosphoserine. Residues Ser2–Val94 are required for homooligomerization. The Cytoplasmic portion of the chain corresponds to Ser2–Ser104. The residue at position 5 (Lys5) is an N6-acetyllysine; alternate. A Glycyl lysine isopeptide (Lys-Gly) (interchain with G-Cter in ubiquitin); alternate cross-link involves residue Lys5. A Phosphotyrosine modification is found at Tyr6. Ser9 is subject to Phosphoserine. Tyr14 carries the phosphotyrosine; by ABL1 and INSR modification. A Phosphotyrosine modification is found at Tyr25. Residues Lys26, Lys30, Lys39, Lys47, and Lys57 each participate in a glycyl lysine isopeptide (Lys-Gly) (interchain with G-Cter in ubiquitin) cross-link. An interaction with CAVIN3 region spans residues Asp82 to Val94. An intramembrane region (helical) is located at residues Thr105–Leu125. At His126–Ile178 the chain is on the cytoplasmic side. The segment at Val131–Gln142 is interacts with SPRY1, SPRY2, SPRY3 and SPRY4. Residues Cys133, Cys143, and Cys156 are each lipidated (S-palmitoyl cysteine). Residues Ser149–Phe160 are interacts with SPRY1, SPRY2, and SPRY4. The tract at residues Phe167–Ile178 is interacts with SPRY1, SPRY2, SPRY3 and SPRY4.

Belongs to the caveolin family. As to quaternary structure, homooligomer. Interacts (via the N-terminus) with DPP4; the interaction is direct. Forms a stable heterooligomeric complex with CAV2 that targets to lipid rafts and drives caveolae formation. Interacts with BMX, BTK, CTNNB1, CDH1, GLIPR2, JUP, NOSTRIN, SNAP25 and STX1A. Interacts with SLC7A9. Interacts with TGFBR1. Interacts with CTNNB1, CDH1 and JUP. Interacts with PACSIN2; this interaction induces membrane tubulation. Interacts with CAVIN3 (via leucine-zipper domain) in a cholesterol-sensitive manner. Interacts with EHD2 in a cholesterol-dependent manner. Interacts with CAVIN1. Forms a ternary complex with UBXN6 and VCP; mediates CAV1 targeting to lysosomes for degradation. Interacts with ABCG1; this interaction regulates ABCG1-mediated cholesterol efflux. Interacts with NEU3; this interaction enhances NEU3 sialidase activity within caveola. Interacts (via C-terminus) with SPRY1, SPRY2 (via C-terminus), SPRY3, and SPRY4. Interacts with IGFBP5; this interaction allows trafficking of IGFBP5 from the plasma membrane to the nucleus. In terms of processing, the N-terminus of both isoforms are blocked. Post-translationally, phosphorylated at Tyr-14 by ABL1 in response to oxidative stress. Ubiquitinated. Undergo monoubiquitination and multi- and/or polyubiquitination. Monoubiquitination of N-terminal lysines promotes integration in a ternary complex with UBXN6 and VCP which promotes oligomeric CAV1 targeting to lysosomes for degradation. Ubiquitinated by ZNRF1; leading to degradation and modulation of the TLR4-mediated immune response. In terms of tissue distribution, adipose tissue, lung, heart, skeletal muscle, stomach, small bowel, kidney, spleen and testis (at protein level).

The protein localises to the golgi apparatus membrane. It is found in the cell membrane. It localises to the membrane. The protein resides in the caveola. Its subcellular location is the membrane raft. The protein localises to the golgi apparatus. It is found in the trans-Golgi network. Its function is as follows. May act as a scaffolding protein within caveolar membranes. Forms a stable heterooligomeric complex with CAV2 that targets to lipid rafts and drives caveolae formation. Mediates the recruitment of CAVIN proteins (CAVIN1/2/3/4) to the caveolae. Interacts directly with G-protein alpha subunits and can functionally regulate their activity. Involved in the costimulatory signal essential for T-cell receptor (TCR)-mediated T-cell activation. Its binding to DPP4 induces T-cell proliferation and NF-kappa-B activation in a T-cell receptor/CD3-dependent manner. Recruits CTNNB1 to caveolar membranes and may regulate CTNNB1-mediated signaling through the Wnt pathway. Negatively regulates TGFB1-mediated activation of SMAD2/3 by mediating the internalization of TGFBR1 from membrane rafts leading to its subsequent degradation. Binds 20(S)-hydroxycholesterol (20(S)-OHC). The chain is Caveolin-1 (Cav1) from Mus musculus (Mouse).